The following is a 496-amino-acid chain: Membrane-bound lytic murein transglycosylase F (496 aa).

An N-terminal signal peptide occupies residues 1-29 (MFFRPDFRPRCAKWLIATGLFLMLGACVE). Residues 30–267 (KPTTLERVKE…RLKDRYYGHV (238 aa)) form a non-LT domain region. The segment at 268–496 (DVLGYVGAYT…SGSSPDKPAL (229 aa)) is LT domain. Glu314 is a catalytic residue. Positions 464–496 (VADGNLHVPGVDKTQPPAPPAPASGSSPDKPAL) are disordered. Positions 486–496 (ASGSSPDKPAL) are enriched in low complexity.

The protein in the N-terminal section; belongs to the bacterial solute-binding protein 3 family. In the C-terminal section; belongs to the transglycosylase Slt family.

It is found in the cell outer membrane. The catalysed reaction is Exolytic cleavage of the (1-&gt;4)-beta-glycosidic linkage between N-acetylmuramic acid (MurNAc) and N-acetylglucosamine (GlcNAc) residues in peptidoglycan, from either the reducing or the non-reducing ends of the peptidoglycan chains, with concomitant formation of a 1,6-anhydrobond in the MurNAc residue.. Murein-degrading enzyme that degrades murein glycan strands and insoluble, high-molecular weight murein sacculi, with the concomitant formation of a 1,6-anhydromuramoyl product. Lytic transglycosylases (LTs) play an integral role in the metabolism of the peptidoglycan (PG) sacculus. Their lytic action creates space within the PG sacculus to allow for its expansion as well as for the insertion of various structures such as secretion systems and flagella. The protein is Membrane-bound lytic murein transglycosylase F of Pseudomonas savastanoi pv. phaseolicola (strain 1448A / Race 6) (Pseudomonas syringae pv. phaseolicola (strain 1448A / Race 6)).